The sequence spans 241 residues: DNA repair protein RecO (241 aa).

The protein belongs to the RecO family.

Functionally, involved in DNA repair and RecF pathway recombination. The chain is DNA repair protein RecO from Azobacteroides pseudotrichonymphae genomovar. CFP2.